The chain runs to 534 residues: Probable inorganic phosphate transporter 1-8 (534 aa).

Topologically, residues 1 to 21 are cytoplasmic; that stretch reads MPIKVLSSLDVARTQWYHFKA. Residues 22-42 traverse the membrane as a helical segment; the sequence is IIVAGMGLFTDAYDLFCIAPV. At 43 to 61 the chain is on the extracellular side; the sequence is MKMISHVYYNGDSINTAVL. Residues 62 to 82 form a helical membrane-spanning segment; it reads STSYAIALLGTATGQLVFGYL. The Cytoplasmic portion of the chain corresponds to 83-90; sequence GDRVGRRR. The helical transmembrane segment at 91–111 threads the bilayer; it reads VYGLCLIIMILSSFGCGFSVC. Residues 112 to 123 are Extracellular-facing; it reads TTRRSCVMVSLG. A helical transmembrane segment spans residues 124-144; the sequence is FFRFFLGLGIGGDYPLSATIM. Topologically, residues 145 to 153 are cytoplasmic; the sequence is SEFANKRTR. The chain crosses the membrane as a helical span at residues 154 to 174; sequence GAFIAAVFSMQGLGILVSSAV. At 175 to 199 the chain is on the extracellular side; that stretch reads TMAVCVAFKRSGGGLEVDAAAPTEA. Residues 200 to 220 form a helical membrane-spanning segment; sequence DLAWRLILMIGALPAALTFYW. Topologically, residues 221–281 are cytoplasmic; it reads RMLMPETARY…KLFSRCFFRL (61 aa). Residues 282 to 302 form a helical membrane-spanning segment; that stretch reads HGRDLFAASFNWFLVDIVFYT. Over 303-333 the chain is Extracellular; sequence SNLLLSHIFSHYSKKPSTAENVYDAAFEVAE. Residues 334–354 form a helical membrane-spanning segment; it reads LGAIIAACSTIPGYWFTVYFI. The Cytoplasmic segment spans residues 355–361; the sequence is DKIGRVK. Residues 362 to 382 form a helical membrane-spanning segment; the sequence is IQIMGFFFMAVIYLVAGIPYS. The Extracellular segment spans residues 383–396; it reads WYWSKHEHNNKGFM. Residues 397–417 form a helical membrane-spanning segment; it reads VLYGLVFFFCNFGPNTTTFII. Residues 418–431 are Cytoplasmic-facing; that stretch reads PAEHFPARFRSTCH. The chain crosses the membrane as a helical span at residues 432–452; that stretch reads GISGAAGKLGAIVGTVGFLWA. Topologically, residues 453-472 are extracellular; that stretch reads TKKMESDDKNQIYPEVNRMR. The chain crosses the membrane as a helical span at residues 473–493; that stretch reads IAFLILGGVCIAGILVTYFFT. The Cytoplasmic portion of the chain corresponds to 494–534; it reads KETMGRSLEENEHDQDNNAESEDEPQIVDGQSSVSTLLQTR. The segment at 501-534 is disordered; that stretch reads LEENEHDQDNNAESEDEPQIVDGQSSVSTLLQTR. A compositionally biased stretch (acidic residues) spans 510–519; sequence NNAESEDEPQ. Phosphoserine is present on S514. Polar residues predominate over residues 522 to 534; that stretch reads DGQSSVSTLLQTR.

Belongs to the major facilitator superfamily. Phosphate:H(+) symporter (TC 2.A.1.9) family. In terms of tissue distribution, in roots.

The protein resides in the membrane. In terms of biological role, high-affinity transporter for external inorganic phosphate. In Arabidopsis thaliana (Mouse-ear cress), this protein is Probable inorganic phosphate transporter 1-8 (PHT1-8).